We begin with the raw amino-acid sequence, 355 residues long: Ion-translocating oxidoreductase complex subunit D (355 aa).

The next 4 helical transmembrane spans lie at 23–43 (WVALCALPGLLAQTYFFGWGT), 44–64 (LVQLILAITIALSLEALVMLF), 78–109 (ALVTAWLLAVAIPPMAPWWIITIGLLFAIVIA), and 129–149 (VVLLISFPVQMTSWSAPLPLI). FMN phosphoryl threonine is present on T194. Helical transmembrane passes span 221–241 (FAGVGWQWVNLAYLAGGLILL), 250–270 (IPVGFLGALLVMSSFFSLFFP), 273–293 (TASPLFHLLSGATMLGAFFIA), 307–327 (ILFGAIIGTLVFIIRSWGGFP), and 328–348 (DGVAFAVLLANMCVPLIDYYT).

The protein belongs to the NqrB/RnfD family. In terms of assembly, the complex is composed of six subunits: RnfA, RnfB, RnfC, RnfD, RnfE and RnfG. It depends on FMN as a cofactor.

It is found in the cell inner membrane. Functionally, part of a membrane-bound complex that couples electron transfer with translocation of ions across the membrane. This is Ion-translocating oxidoreductase complex subunit D from Vibrio vulnificus (strain CMCP6).